The following is a 301-amino-acid chain: Porphobilinogen deaminase (301 aa).

The residue at position 235 (Cys235) is an S-(dipyrrolylmethanemethyl)cysteine.

This sequence belongs to the HMBS family. As to quaternary structure, monomer. Dipyrromethane serves as cofactor.

It carries out the reaction 4 porphobilinogen + H2O = hydroxymethylbilane + 4 NH4(+). Its pathway is porphyrin-containing compound metabolism; protoporphyrin-IX biosynthesis; coproporphyrinogen-III from 5-aminolevulinate: step 2/4. Its function is as follows. Tetrapolymerization of the monopyrrole PBG into the hydroxymethylbilane pre-uroporphyrinogen in several discrete steps. This is Porphobilinogen deaminase from Thermus thermophilus (strain ATCC BAA-163 / DSM 7039 / HB27).